Reading from the N-terminus, the 630-residue chain is Polygalacturonase-1 non-catalytic subunit beta (630 aa).

The signal sequence occupies residues 1-27 (MHTKIHLPPCILLLLLFSLPSFNVVVG). Residues 28–108 (GDGESGNPFT…MCAPDLSPSL (81 aa)) constitute a propeptide that is removed on maturation. Asn124, Asn142, Asn256, Asn334, Asn369, and Asn387 each carry an N-linked (GlcNAc...) asparagine glycan. Residues 398–630 (EVNGGKKVNN…ENDMTWAIAD (233 aa)) constitute a propeptide that is removed on maturation. One can recognise a BURP domain in the interval 415-629 (FFREKMLKSG…FENDMTWAIA (215 aa)).

As to quaternary structure, interacts with polygalacturonase-2 (isoenzymes PG2A and PG2B) to form heterodimers called polygalacturonase-1 (PG1). As to expression, mostly expressed in fruit pericarp. Also detected at low levels in cell wall of roots, leaves and flowers (at protein level).

The protein resides in the secreted. The protein localises to the extracellular space. It localises to the apoplast. Its subcellular location is the cell wall. Its function is as follows. Non-catalytic subunit of the polygalacturonase isozyme 1 (PG1). Necessary and sufficient to convert the polygalacturonase from its monomeric form PG2 to its heterodimeric form PG1. Seems to limit the depolymerization and solubilization of cell wall polyuronides mediated by PG2 during ripening, probably by recruiting PG2 to form PG1. In Solanum lycopersicum (Tomato), this protein is Polygalacturonase-1 non-catalytic subunit beta (GP1).